A 594-amino-acid polypeptide reads, in one-letter code: Transcriptional repressor p66-beta (594 aa).

Serine 17 carries the phosphoserine modification. Glycyl lysine isopeptide (Lys-Gly) (interchain with G-Cter in SUMO2) cross-links involve residues lysine 33 and lysine 66. The tract at residues 62–143 (ELPTKQDGSG…ASSPRSSSRM (82 aa)) is disordered. Positions 74–89 (GYEEKLNGNLRPHGDN) are enriched in basic and acidic residues. Residue lysine 98 forms a Glycyl lysine isopeptide (Lys-Gly) (interchain with G-Cter in SUMO2) linkage. Residues 109 to 119 (SARRSEPDRGR) show a composition bias toward basic and acidic residues. Threonine 121 carries the post-translational modification Phosphothreonine. Phosphoserine occurs at positions 123, 130, 135, and 136. Low complexity predominate over residues 130 to 140 (SDNEASSPRSS). Residues 141 to 195 (SRMEERLKAANLEMFKGKGMEERQQLIKQLRDELRLEEARLVLLKKLRQSQLQKE) are a coiled coil. Residue lysine 148 forms a Glycyl lysine isopeptide (Lys-Gly) (interchain with G-Cter in SUMO2) linkage. Residues 166–191 (LIKQLRDELRLEEARLVLLKKLRQSQ) are CR1; interaction with MBD2 and MBD3. A Glycyl lysine isopeptide (Lys-Gly) (interchain with G-Cter in SUMO2) cross-link involves residue lysine 200. Phosphoserine is present on serine 209. The interval 214–237 (SPAHVGQQGLSKLPSRPGAQGIEP) is disordered. Lysine 282 participates in a covalent cross-link: Glycyl lysine isopeptide (Lys-Gly) (interchain with G-Cter in SUMO2). Phosphoserine occurs at positions 334, 339, and 341. A CR2; histone tail-binding region spans residues 341–481 (SAMSDAANSQ…QEQEIEQRLQ (141 aa)). Glycyl lysine isopeptide (Lys-Gly) (interchain with G-Cter in SUMO2) cross-links involve residues lysine 354, lysine 455, and lysine 468. The segment at 415 to 468 (RVEPFVCAQCRTDFTPHWKQEKNGKILCEQCMTSNQKKALKAEHTNRLKNAFVK) adopts a GATA-type zinc-finger fold. Residues 450-483 (QKKALKAEHTNRLKNAFVKALQQEQEIEQRLQQQ) adopt a coiled-coil conformation. Serine 487 is modified (phosphoserine). Lysine 499 participates in a covalent cross-link: Glycyl lysine isopeptide (Lys-Gly) (interchain with G-Cter in SUMO2).

In terms of assembly, homooligomer. Component of the nucleosome remodeling and deacetylase (NuRD) repressor complex, composed of core proteins MTA1, MTA2, MTA3, RBBP4, RBBP7, HDAC1, HDAC2, MBD2, MBD3, and peripherally associated proteins CDK2AP1, CDK2AP2, GATAD2A, GATAD2B, CHD3, CHD4 and CHD5. The exact stoichiometry of the NuRD complex is unknown, and some subunits such as MBD2 and MBD3, GATAD2A and GATAD2B, and CHD3, CHD4 and CHD5 define mutually exclusive NuRD complexes. Interacts with MBD2; this is required for the enhancement of MBD2-mediated repression and for targeting to the chromatin. Interacts with MBD3. Component of the MeCP1 histone deacetylase complex. Interacts with histone tails, including that of histones H2A, H2B, H3 and H4. Interacts with ERCC6.

Its subcellular location is the nucleus speckle. The protein localises to the nucleus. It localises to the chromosome. Transcriptional repressor. Acts as a component of the histone deacetylase NuRD complex which participates in the remodeling of chromatin. Enhances MBD2-mediated repression. Efficient repression requires the presence of GATAD2A. Targets MBD3 to discrete loci in the nucleus. May play a role in synapse development. The protein is Transcriptional repressor p66-beta (Gatad2b) of Mus musculus (Mouse).